The following is a 318-amino-acid chain: Probable casein kinase I homolog ECU11_1980 (318 aa).

One can recognise a Protein kinase domain in the interval 8–276 (YTICREIGKG…YLNSLLDKIF (269 aa)). Residues 14–22 (IGKGGFGKV) and Lys-37 each bind ATP. Catalysis depends on Asp-129, which acts as the Proton acceptor.

This sequence belongs to the protein kinase superfamily. CK1 Ser/Thr protein kinase family. Casein kinase I subfamily.

The protein localises to the nucleus. The catalysed reaction is L-seryl-[protein] + ATP = O-phospho-L-seryl-[protein] + ADP + H(+). It catalyses the reaction L-threonyl-[protein] + ATP = O-phospho-L-threonyl-[protein] + ADP + H(+). Functionally, involved in DNA repair. May regulate the activity of protein(s) involved in double strand break repair caused by gamma rays. The polypeptide is Probable casein kinase I homolog ECU11_1980 (Encephalitozoon cuniculi (strain GB-M1) (Microsporidian parasite)).